A 127-amino-acid chain; its full sequence is NADPH-dependent 7-cyano-7-deazaguanine reductase (127 aa).

Cys-40 functions as the Thioimide intermediate in the catalytic mechanism. The Proton donor role is filled by Asp-47. Substrate is bound by residues 62-64 (VEL) and 81-82 (HE).

Belongs to the GTP cyclohydrolase I family. QueF type 1 subfamily.

The protein resides in the cytoplasm. It catalyses the reaction 7-aminomethyl-7-carbaguanine + 2 NADP(+) = 7-cyano-7-deazaguanine + 2 NADPH + 3 H(+). It functions in the pathway tRNA modification; tRNA-queuosine biosynthesis. Catalyzes the NADPH-dependent reduction of 7-cyano-7-deazaguanine (preQ0) to 7-aminomethyl-7-deazaguanine (preQ1). The protein is NADPH-dependent 7-cyano-7-deazaguanine reductase of Campylobacter jejuni subsp. jejuni serotype O:2 (strain ATCC 700819 / NCTC 11168).